We begin with the raw amino-acid sequence, 212 residues long: Probable 2-dehydro-3-deoxy-6-phosphogalactonate aldolase (212 aa).

Arg18 contributes to the 2-dehydro-3-deoxy-6-phospho-D-galactonate binding site. Glu41 serves as the catalytic Proton donor/acceptor. 2-dehydro-3-deoxy-6-phospho-D-galactonate is bound by residues Thr70, Lys130, Gly160, Gly180, and Ser181. The active-site Schiff-base intermediate with substrate is Lys130.

It belongs to the KHG/KDPG aldolase family. In terms of assembly, homotrimer.

The enzyme catalyses 2-dehydro-3-deoxy-6-phospho-D-galactonate = D-glyceraldehyde 3-phosphate + pyruvate. It functions in the pathway carbohydrate acid metabolism; D-galactonate degradation; D-glyceraldehyde 3-phosphate and pyruvate from D-galactonate: step 3/3. Involved in the degradation of galactose via the DeLey-Doudoroff pathway. Catalyzes the reversible, stereospecific retro-aldol cleavage of 2-keto-3-deoxy-6-phosphogalactonate (KDPGal) to pyruvate and D-glyceraldehyde-3-phosphate. The chain is Probable 2-dehydro-3-deoxy-6-phosphogalactonate aldolase (dgoA) from Rhizobium meliloti (strain 1021) (Ensifer meliloti).